Consider the following 790-residue polypeptide: Disintegrin and metalloproteinase domain-containing protein 30 (790 aa).

The signal sequence occupies residues 1–27 (MRSVQIFLSQCRLLLLLVPTMLLKSLG). The propeptide occupies 28–198 (EDVIFHPEGE…KARLRDFPGS (171 aa)). The Cysteine switch motif lies at 170 to 177 (QVCGLSDD). Residue Cys172 participates in Zn(2+) binding. The Extracellular portion of the chain corresponds to 199–687 (YKHPKYLELI…LRGAIPSSIW (489 aa)). The Peptidase M12B domain maps to 203–393 (KYLELILLFD…SGATCLNNIP (191 aa)). N-linked (GlcNAc...) asparagine glycosylation occurs at Asn222. 3 disulfides stabilise this stretch: Cys313-Cys388, Cys353-Cys373, and Cys355-Cys361. Residue His338 participates in Zn(2+) binding. Glu339 is a catalytic residue. Residues His342 and His348 each contribute to the Zn(2+) site. 4 N-linked (GlcNAc...) asparagine glycosylation sites follow: Asn372, Asn438, Asn473, and Asn625. The Disintegrin domain maps to 399-485 (LKRCGNKIVE…SCPNDVYKQD (87 aa)). Cys457 and Cys477 are oxidised to a cystine. Residues 629-663 (LQFDCLPEKCNTRGVCNNRKNCHCMYGWAPPFCEE) enclose the EGF-like domain. Disulfide bonds link Cys633-Cys644, Cys638-Cys650, and Cys652-Cys661. A helical membrane pass occupies residues 688–708 (VVSIIMFRLILLILSVVFVFF). The Cytoplasmic portion of the chain corresponds to 709–790 (RQVIGNHLKP…KAKSVKKQKK (82 aa)). Positions 720 to 779 (QEKMPLSKAKTEQEESKTKTVQEESKTKTGQEESEAKTGQEESKAKTGQEESKANIESKR) are enriched in basic and acidic residues. Positions 720 to 790 (QEKMPLSKAK…KAKSVKKQKK (71 aa)) are disordered. 5 tandem repeats follow at residues 732–740 (QEESKTKTV), 741–749 (QEESKTKTG), 750–758 (QEESEAKTG), 759–767 (QEESKAKTG), and 768–776 (QEESKANIE). A 5 X 9 AA approximate repeats region spans residues 732-776 (QEESKTKTVQEESKTKTGQEESEAKTGQEESKAKTGQEESKANIE). A compositionally biased stretch (basic residues) spans 780–790 (PKAKSVKKQKK).

In terms of assembly, interacts with CTSD; this leads to activation of CTSD. Zn(2+) is required as a cofactor. As to expression, expressed in brain neurons (at protein level). Expressed in testis.

The protein localises to the late endosome membrane. Plays a role in lysosomal amyloid precursor protein (APP) processing by cleaving and activating CTSD/cathepsin D which leads to APP degradation. In Homo sapiens (Human), this protein is Disintegrin and metalloproteinase domain-containing protein 30 (ADAM30).